A 161-amino-acid polypeptide reads, in one-letter code: Crossover junction endodeoxyribonuclease RuvC (161 aa).

Catalysis depends on residues Asp-7, Glu-67, and Asp-140. Mg(2+)-binding residues include Asp-7, Glu-67, and Asp-140.

Belongs to the RuvC family. In terms of assembly, homodimer which binds Holliday junction (HJ) DNA. The HJ becomes 2-fold symmetrical on binding to RuvC with unstacked arms; it has a different conformation from HJ DNA in complex with RuvA. In the full resolvosome a probable DNA-RuvA(4)-RuvB(12)-RuvC(2) complex forms which resolves the HJ. The cofactor is Mg(2+).

The protein localises to the cytoplasm. The catalysed reaction is Endonucleolytic cleavage at a junction such as a reciprocal single-stranded crossover between two homologous DNA duplexes (Holliday junction).. Its function is as follows. The RuvA-RuvB-RuvC complex processes Holliday junction (HJ) DNA during genetic recombination and DNA repair. Endonuclease that resolves HJ intermediates. Cleaves cruciform DNA by making single-stranded nicks across the HJ at symmetrical positions within the homologous arms, yielding a 5'-phosphate and a 3'-hydroxyl group; requires a central core of homology in the junction. The consensus cleavage sequence is 5'-(A/T)TT(C/G)-3'. Cleavage occurs on the 3'-side of the TT dinucleotide at the point of strand exchange. HJ branch migration catalyzed by RuvA-RuvB allows RuvC to scan DNA until it finds its consensus sequence, where it cleaves and resolves the cruciform DNA. The sequence is that of Crossover junction endodeoxyribonuclease RuvC from Natranaerobius thermophilus (strain ATCC BAA-1301 / DSM 18059 / JW/NM-WN-LF).